A 194-amino-acid chain; its full sequence is Peptidyl-tRNA hydrolase (194 aa).

Tyrosine 17 lines the tRNA pocket. Catalysis depends on histidine 22, which acts as the Proton acceptor. TRNA is bound by residues phenylalanine 68, asparagine 70, and asparagine 116.

The protein belongs to the PTH family. As to quaternary structure, monomer.

The protein localises to the cytoplasm. The enzyme catalyses an N-acyl-L-alpha-aminoacyl-tRNA + H2O = an N-acyl-L-amino acid + a tRNA + H(+). Its function is as follows. Hydrolyzes ribosome-free peptidyl-tRNAs (with 1 or more amino acids incorporated), which drop off the ribosome during protein synthesis, or as a result of ribosome stalling. Catalyzes the release of premature peptidyl moieties from peptidyl-tRNA molecules trapped in stalled 50S ribosomal subunits, and thus maintains levels of free tRNAs and 50S ribosomes. This is Peptidyl-tRNA hydrolase from Shewanella halifaxensis (strain HAW-EB4).